Reading from the N-terminus, the 336-residue chain is DNA-directed RNA polymerase subunit alpha (336 aa).

The interval 1–226 is alpha N-terminal domain (alpha-NTD); it reads MLIAQRPTLS…ELFGLARELN (226 aa). The segment at 241 to 336 is alpha C-terminal domain (alpha-CTD); sequence AALAADMALP…DDAAFSDDEL (96 aa).

This sequence belongs to the RNA polymerase alpha chain family. As to quaternary structure, homodimer. The RNAP catalytic core consists of 2 alpha, 1 beta, 1 beta' and 1 omega subunit. When a sigma factor is associated with the core the holoenzyme is formed, which can initiate transcription.

The catalysed reaction is RNA(n) + a ribonucleoside 5'-triphosphate = RNA(n+1) + diphosphate. DNA-dependent RNA polymerase catalyzes the transcription of DNA into RNA using the four ribonucleoside triphosphates as substrates. The protein is DNA-directed RNA polymerase subunit alpha of Arthrobacter sp. (strain FB24).